We begin with the raw amino-acid sequence, 100 residues long: Urease subunit gamma (100 aa).

Belongs to the urease gamma subunit family. In terms of assembly, heterotrimer of UreA (gamma), UreB (beta) and UreC (alpha) subunits. Three heterotrimers associate to form the active enzyme.

The protein resides in the cytoplasm. It carries out the reaction urea + 2 H2O + H(+) = hydrogencarbonate + 2 NH4(+). It participates in nitrogen metabolism; urea degradation; CO(2) and NH(3) from urea (urease route): step 1/1. The chain is Urease subunit gamma from Prochlorococcus marinus subsp. pastoris (strain CCMP1986 / NIES-2087 / MED4).